A 197-amino-acid chain; its full sequence is Protein Hikeshi (197 aa).

The required for F-X-F-G repeats-nucleoporins recognition and nuclear import stretch occupies residues 18–55 (VAEDKFVFDLPDYENINHVVVFMLGTIPFPEGMGGSVY). Residues 124 to 134 (QTPVGSAAVSS) are flexible linker region involved in nuclear import of HSP70 proteins.

The protein belongs to the OPI10 family. Forms an asymmetric homodimer; required for binding and nuclear import of HSP70 proteins. Interacts with ATP-bound HSP70 proteins. Interacts with NUP62 and NUP153 (via F-X-F-G repeats). Interacts with HSPA8. Expressed in the central white matter of newborn and adult brain, particularly in regions where oligodendrocytes are generated.

The protein resides in the cytoplasm. It is found in the cytosol. The protein localises to the nucleus. Its function is as follows. Acts as a specific nuclear import carrier for HSP70 proteins following heat-shock stress: acts by mediating the nucleoporin-dependent translocation of ATP-bound HSP70 proteins into the nucleus. HSP70 proteins import is required to protect cells from heat shock damages. Does not translocate ADP-bound HSP70 proteins into the nucleus. May also be indirectly required for organization and/or function of the secretory apparatus in Club cells in lung. The sequence is that of Protein Hikeshi from Mus musculus (Mouse).